Reading from the N-terminus, the 254-residue chain is UPF0603 protein YdjH (254 aa).

Residues 1–29 (MRGFFGKAIFVVLAVFIMMPLLGIEAVRA) form the signal peptide. A helical transmembrane segment spans residues 166–186 (IFFTWWFQLIAAIAVGGIAVS). Positions 223–235 (VTRERKPSDKDSG) are enriched in basic and acidic residues. A disordered region spans residues 223-254 (VTRERKPSDKDSGSDGGVTKGGTSYSGSRGSF). Over residues 243 to 254 (GGTSYSGSRGSF) the composition is skewed to polar residues.

It belongs to the UPF0603 family.

It is found in the cell membrane. This chain is UPF0603 protein YdjH (ydjH), found in Bacillus subtilis (strain 168).